The chain runs to 432 residues: 3-phosphoshikimate 1-carboxyvinyltransferase (432 aa).

3-phosphoshikimate is bound by residues Lys22, Ser23, and Arg27. Lys22 lines the phosphoenolpyruvate pocket. Gly96 and Arg127 together coordinate phosphoenolpyruvate. Residues Ser173, Ser174, Gln175, Ser201, Asp316, Asn339, and Lys343 each coordinate 3-phosphoshikimate. Residue Gln175 coordinates phosphoenolpyruvate. Catalysis depends on Asp316, which acts as the Proton acceptor. Residues Arg347, Arg391, and Lys416 each coordinate phosphoenolpyruvate.

This sequence belongs to the EPSP synthase family. Monomer.

Its subcellular location is the cytoplasm. The enzyme catalyses 3-phosphoshikimate + phosphoenolpyruvate = 5-O-(1-carboxyvinyl)-3-phosphoshikimate + phosphate. The protein operates within metabolic intermediate biosynthesis; chorismate biosynthesis; chorismate from D-erythrose 4-phosphate and phosphoenolpyruvate: step 6/7. Functionally, catalyzes the transfer of the enolpyruvyl moiety of phosphoenolpyruvate (PEP) to the 5-hydroxyl of shikimate-3-phosphate (S3P) to produce enolpyruvyl shikimate-3-phosphate and inorganic phosphate. The protein is 3-phosphoshikimate 1-carboxyvinyltransferase of Haemophilus influenzae (strain 86-028NP).